We begin with the raw amino-acid sequence, 784 residues long: Replication protein A 70 kDa DNA-binding subunit E (784 aa).

The disordered stretch occupies residues 114–224 (HPVPGGKHND…NRGPVARNEA (111 aa)). Composition is skewed to polar residues over residues 132–148 (KFNT…QVNN) and 167–190 (SSVP…NGVT). The segment at residues 241 to 327 (WTIKARVTNK…RNDYEIMLDN (87 aa)) is a DNA-binding region (OB). The C4-type zinc-finger motif lies at 532-558 (CPIMNGDRPCSKKVTDNGDGTWRCEKC). Disordered stretches follow at residues 678-707 (LPIN…PSSV) and 746-784 (AKCP…VGSY). Residues 695 to 707 (GIGSSGTRDPSSV) show a composition bias toward polar residues. Gly residues predominate over residues 760–776 (YMGGSYRGTTGSYGGGL).

This sequence belongs to the replication factor A protein 1 family. Heterotrimer of RPA1, RPA2 and RPA3 (canonical replication protein A complex).

Its subcellular location is the nucleus. In terms of biological role, component of the replication protein A complex (RPA) required for DNA recombination, repair and replication. The activity of RPA is mediated by single-stranded DNA binding and protein interactions. Probably involved in repair of double-strand DNA breaks (DSBs) induced by genotoxic stresses. The polypeptide is Replication protein A 70 kDa DNA-binding subunit E (RPA1E) (Arabidopsis thaliana (Mouse-ear cress)).